A 519-amino-acid chain; its full sequence is Exodeoxyribonuclease 7 large subunit (519 aa).

It belongs to the XseA family. Heterooligomer composed of large and small subunits.

The protein localises to the cytoplasm. It catalyses the reaction Exonucleolytic cleavage in either 5'- to 3'- or 3'- to 5'-direction to yield nucleoside 5'-phosphates.. Its function is as follows. Bidirectionally degrades single-stranded DNA into large acid-insoluble oligonucleotides, which are then degraded further into small acid-soluble oligonucleotides. The protein is Exodeoxyribonuclease 7 large subunit of Cereibacter sphaeroides (strain ATCC 17025 / ATH 2.4.3) (Rhodobacter sphaeroides).